A 313-amino-acid chain; its full sequence is 2,3-dihydroxyphenylpropionate/2,3-dihydroxicinnamic acid 1,2-dioxygenase (313 aa).

The Proton donor role is filled by H116. Catalysis depends on H180, which acts as the Proton acceptor.

It belongs to the LigB/MhpB extradiol dioxygenase family. Homotetramer. The cofactor is Fe(2+).

The enzyme catalyses 3-(2,3-dihydroxyphenyl)propanoate + O2 = (2Z,4E)-2-hydroxy-6-oxonona-2,4-dienedioate + H(+). The catalysed reaction is (2E)-3-(2,3-dihydroxyphenyl)prop-2-enoate + O2 = (2Z,4E,7E)-2-hydroxy-6-oxonona-2,4,7-trienedioate + H(+). The protein operates within aromatic compound metabolism; 3-phenylpropanoate degradation. In terms of biological role, catalyzes the non-heme iron(II)-dependent oxidative cleavage of 2,3-dihydroxyphenylpropionic acid and 2,3-dihydroxicinnamic acid into 2-hydroxy-6-ketononadienedioate and 2-hydroxy-6-ketononatrienedioate, respectively. In Mycobacterium sp. (strain MCS), this protein is 2,3-dihydroxyphenylpropionate/2,3-dihydroxicinnamic acid 1,2-dioxygenase.